The following is a 355-amino-acid chain: tRNA-specific 2-thiouridylase MnmA (355 aa).

ATP is bound by residues 6 to 13 and methionine 32; that span reads AMSGGVDS. Cysteine 93 acts as the Nucleophile in catalysis. Residues cysteine 93 and cysteine 191 are joined by a disulfide bond. Glycine 117 is a binding site for ATP. An interaction with tRNA region spans residues 140-142; that stretch reads KDQ. The Cysteine persulfide intermediate role is filled by cysteine 191. Residues 296–297 are interaction with tRNA; it reads RY.

The protein belongs to the MnmA/TRMU family.

It is found in the cytoplasm. It carries out the reaction S-sulfanyl-L-cysteinyl-[protein] + uridine(34) in tRNA + AH2 + ATP = 2-thiouridine(34) in tRNA + L-cysteinyl-[protein] + A + AMP + diphosphate + H(+). Catalyzes the 2-thiolation of uridine at the wobble position (U34) of tRNA, leading to the formation of s(2)U34. This Pelobacter propionicus (strain DSM 2379 / NBRC 103807 / OttBd1) protein is tRNA-specific 2-thiouridylase MnmA.